Here is a 692-residue protein sequence, read N- to C-terminus: Elongation factor G (692 aa).

The region spanning 8 to 283 is the tr-type G domain; that stretch reads KNTRNIGIMA…AVLDYLPSPV (276 aa). Residues 17–24, 81–85, and 135–138 contribute to the GTP site; these read AHIDAGKT, DTPGH, and NKMD.

Belongs to the TRAFAC class translation factor GTPase superfamily. Classic translation factor GTPase family. EF-G/EF-2 subfamily.

It localises to the cytoplasm. In terms of biological role, catalyzes the GTP-dependent ribosomal translocation step during translation elongation. During this step, the ribosome changes from the pre-translocational (PRE) to the post-translocational (POST) state as the newly formed A-site-bound peptidyl-tRNA and P-site-bound deacylated tRNA move to the P and E sites, respectively. Catalyzes the coordinated movement of the two tRNA molecules, the mRNA and conformational changes in the ribosome. This chain is Elongation factor G, found in Exiguobacterium sibiricum (strain DSM 17290 / CCUG 55495 / CIP 109462 / JCM 13490 / 255-15).